The chain runs to 227 residues: Mitochondrial inner membrane protease ATP23 (227 aa).

Residue histidine 129 coordinates a divalent metal cation. Glutamate 130 is a catalytic residue. Histidine 133 provides a ligand contact to a divalent metal cation.

The protein belongs to the peptidase M76 family.

It is found in the mitochondrion inner membrane. Functionally, has a dual role in the assembly of mitochondrial ATPase. Acts as a protease that removes N-terminal residues of mitochondrial ATPase CF(0) subunit 6 at the intermembrane space side. Also involved in the correct assembly of the membrane-embedded ATPase CF(0) particle, probably mediating association of subunit 6 with the subunit 9 ring. This is Mitochondrial inner membrane protease ATP23 (ATP23) from Cryptococcus neoformans var. neoformans serotype D (strain JEC21 / ATCC MYA-565) (Filobasidiella neoformans).